Consider the following 511-residue polypeptide: uncharacterized protein (511 aa).

The next 14 helical transmembrane spans lie at 7–27 (WVIS…NTAL), 46–66 (VNPI…GPLL), 80–100 (LPVF…ALMA), 107–127 (GAAT…SFPI), 134–154 (LLVL…LGTI), 163–183 (WLFF…YFFL), 200–220 (AGIL…IFLQ), 226–246 (SGYV…LLIV), 266–286 (VLGL…LSAF), 301–321 (LILL…LSAL), 329–349 (GMLG…WLHI), 357–377 (MFAA…AAGL), 394–414 (TAVQ…IGFF), and 437–457 (LFFI…CMNA). A disordered region spans residues 465 to 486 (AHKPHDKAKTAPEKPAVSAQGL).

It belongs to the major facilitator superfamily.

The protein resides in the cell membrane. This is an uncharacterized protein from Bacillus subtilis (strain 168).